The sequence spans 282 residues: Tyrosine recombinase XerA (282 aa).

Positions 2-79 (EAINEVIEEY…ALRSYFRFEG (78 aa)) constitute a Core-binding (CB) domain. One can recognise a Tyr recombinase domain in the interval 95 to 271 (SLPKSLTREE…TVEHLRKAQE (177 aa)). Residues Arg-132, Lys-157, His-223, Arg-226, and His-249 contribute to the active site. The active-site O-(3'-phospho-DNA)-tyrosine intermediate is the Tyr-258.

This sequence belongs to the 'phage' integrase family. XerA subfamily.

It is found in the cytoplasm. Site-specific tyrosine recombinase, which acts by catalyzing the cutting and rejoining of the recombining DNA molecules. The protein is Tyrosine recombinase XerA of Thermococcus onnurineus (strain NA1).